Reading from the N-terminus, the 307-residue chain is Oxygen-dependent coproporphyrinogen-III oxidase (307 aa).

S99 contacts substrate. A divalent metal cation-binding residues include H103 and H113. H113 acts as the Proton donor in catalysis. 115-117 (NVR) lines the substrate pocket. H152 and H182 together coordinate a divalent metal cation. Residues 247 to 282 (YVEFNLVFDRGTLFGLQSGGRTESILLSMPPTAGWR) are important for dimerization. 265–267 (GGR) contributes to the substrate binding site.

This sequence belongs to the aerobic coproporphyrinogen-III oxidase family. In terms of assembly, homodimer. A divalent metal cation is required as a cofactor.

It localises to the cytoplasm. It carries out the reaction coproporphyrinogen III + O2 + 2 H(+) = protoporphyrinogen IX + 2 CO2 + 2 H2O. Its pathway is porphyrin-containing compound metabolism; protoporphyrin-IX biosynthesis; protoporphyrinogen-IX from coproporphyrinogen-III (O2 route): step 1/1. Its function is as follows. Involved in the heme biosynthesis. Catalyzes the aerobic oxidative decarboxylation of propionate groups of rings A and B of coproporphyrinogen-III to yield the vinyl groups in protoporphyrinogen-IX. The polypeptide is Oxygen-dependent coproporphyrinogen-III oxidase (Burkholderia mallei (strain SAVP1)).